The following is a 128-amino-acid chain: uncharacterized protein (128 aa).

A disordered region spans residues 1-26; the sequence is MNSATSETTTNTGAAETTTSTGAAET. A helical membrane pass occupies residues 105 to 127; it reads IANGLLTNNGISVFISTVLLAIV.

It belongs to the flocculin family.

The protein localises to the membrane. This is an uncharacterized protein from Saccharomyces cerevisiae (strain ATCC 204508 / S288c) (Baker's yeast).